An 888-amino-acid chain; its full sequence is Patched domain-containing protein 1 (888 aa).

Residues 20–40 (FIASHPVFFASAPVLISILLG) traverse the membrane as a helical segment. 3 N-linked (GlcNAc...) asparagine glycosylation sites follow: Asn-77, Asn-133, and Asn-167. Residues 268 to 427 (SERYLVTSLI…LSFYGSSLVF (160 aa)) form the SSD domain. Helical transmembrane passes span 273-293 (VTSL…QDCV) and 298-318 (WLGL…AGII). N-linked (GlcNAc...) asparagine glycans are attached at residues Asn-319 and Asn-326. Transmembrane regions (helical) follow at residues 328-348 (TFLG…FEML), 373-393 (LSFS…ASPF), 407-427 (CIAI…SLVF), and 502-522 (PFVV…YLQV). 3 N-linked (GlcNAc...) asparagine glycosylation sites follow: Asn-568, Asn-599, and Asn-608. Transmembrane regions (helical) follow at residues 707–727 (ALFL…NVWI) and 738–758 (VIGF…LCLI). Asn-762 is a glycosylation site (N-linked (GlcNAc...) asparagine). A helical transmembrane segment spans residues 795-815 (GVAILQSYLCYIVGLFPLAAV). N-linked (GlcNAc...) asparagine glycosylation is present at Asn-818. The chain crosses the membrane as a helical span at residues 826-846 (CLFLIAFVTFFHCFAILPVIL).

The protein belongs to the patched family. As to expression, broadly expressed in the brain. Selectively expressed in the thalamic reticular nucleus (TRN) in early development and continues to be enriched in this structure throughout adult life.

It is found in the cell membrane. Its subcellular location is the cell projection. The protein localises to the dendritic spine. Its function is as follows. Required for the development and function of the thalamic reticular nucleus (TRN), a part of the thalamus that is critical for thalamocortical transmission, generation of sleep rhythms, sensorimotor processing and attention. Can bind cholesterol in vitro. The protein is Patched domain-containing protein 1 of Mus musculus (Mouse).